A 213-amino-acid chain; its full sequence is Putative manganese efflux pump MntP (213 aa).

The next 6 helical transmembrane spans lie at 3 to 23, 36 to 56, 67 to 87, 130 to 150, 152 to 172, and 187 to 207; these read ILSI…VSVA, ALKV…IGWG, AFDH…MIFE, LAIA…FLGI, IVQT…LGVI, and IVGG…HTGI.

This sequence belongs to the MntP (TC 9.B.29) family.

It localises to the cell membrane. Functionally, probably functions as a manganese efflux pump. In Clostridium perfringens (strain SM101 / Type A), this protein is Putative manganese efflux pump MntP.